Reading from the N-terminus, the 84-residue chain is MARENKKELIGKVVSDKMSKTIVVEIVQRKMHPIYHKYLKVSKKVKAHDEKEVSKVGDKVKIIEVRPISKDKRWSLVEVLEKLK.

It belongs to the universal ribosomal protein uS17 family. Part of the 30S ribosomal subunit.

One of the primary rRNA binding proteins, it binds specifically to the 5'-end of 16S ribosomal RNA. The chain is Small ribosomal subunit protein uS17 from Borreliella burgdorferi (strain ATCC 35210 / DSM 4680 / CIP 102532 / B31) (Borrelia burgdorferi).